The primary structure comprises 333 residues: Testin-2 (333 aa).

The first 17 residues, 1–17 (MIAVLFLAILCLEVDST), serve as a signal peptide directing secretion. Intrachain disulfides connect Cys135–Cys178, Cys169–Cys211, and Cys269–Cys322. N-linked (GlcNAc...) asparagine glycosylation occurs at Asn173. Catalysis depends on residues His276 and Asn300.

Belongs to the peptidase C1 family. Sertoli cells.

Its subcellular location is the secreted. In Rattus norvegicus (Rat), this protein is Testin-2 (Testin).